A 100-amino-acid polypeptide reads, in one-letter code: DNA-directed RNA polymerase subunit Rpo11 (100 aa).

It belongs to the archaeal Rpo11/eukaryotic RPB11/RPC19 RNA polymerase subunit family. Part of the RNA polymerase complex.

It localises to the cytoplasm. The catalysed reaction is RNA(n) + a ribonucleoside 5'-triphosphate = RNA(n+1) + diphosphate. In terms of biological role, DNA-dependent RNA polymerase (RNAP) catalyzes the transcription of DNA into RNA using the four ribonucleoside triphosphates as substrates. This Picrophilus torridus (strain ATCC 700027 / DSM 9790 / JCM 10055 / NBRC 100828 / KAW 2/3) protein is DNA-directed RNA polymerase subunit Rpo11.